We begin with the raw amino-acid sequence, 292 residues long: Chronophin (292 aa).

Residue aspartate 25 is the Nucleophile of the active site. 2 residues coordinate Mg(2+): aspartate 25 and aspartate 27. Aspartate 27 functions as the Proton donor in the catalytic mechanism. Residues 58–60 (SNN), histidine 178, and lysine 209 each bind substrate. Position 234 (aspartate 234) interacts with Mg(2+).

The protein belongs to the HAD-like hydrolase superfamily. Homodimer. Mg(2+) serves as cofactor. As to expression, ubiquitous. highly expressed in brain (at protein level).

Its subcellular location is the cytoplasm. The protein localises to the cytosol. The protein resides in the cytoskeleton. It is found in the cell projection. It localises to the ruffle membrane. Its subcellular location is the lamellipodium membrane. The protein localises to the cell membrane. It catalyses the reaction pyridoxal 5'-phosphate + H2O = pyridoxal + phosphate. The enzyme catalyses pyridoxine 5'-phosphate + H2O = pyridoxine + phosphate. The catalysed reaction is pyridoxamine + phosphate = pyridoxamine 5'-phosphate + H2O. It carries out the reaction O-phospho-L-seryl-[protein] + H2O = L-seryl-[protein] + phosphate. With respect to regulation, inhibited by beryllium trifluoride. Its function is as follows. Functions as a pyridoxal phosphate (PLP) phosphatase, which also catalyzes the dephosphorylation of pyridoxine 5'-phosphate (PNP) and pyridoxamine 5'-phosphate (PMP), with order of substrate preference PLP &gt; PNP &gt; PMP and therefore plays a role in vitamin B6 metabolism. Also functions as a protein serine phosphatase that specifically dephosphorylates 'Ser-3' in proteins of the actin-depolymerizing factor (ADF)/cofilin family like CFL1 and DSTN. Thereby, regulates cofilin-dependent actin cytoskeleton reorganization, being required for normal progress through mitosis and normal cytokinesis. Does not dephosphorylate phosphothreonines in LIMK1. Does not dephosphorylate peptides containing phosphotyrosine. The chain is Chronophin from Mus musculus (Mouse).